We begin with the raw amino-acid sequence, 1075 residues long: Paired amphipathic helix protein pst2 (1075 aa).

PAH domains lie at 28–102, 138–208, and 243–319; these read SPNG…LPSS, LPCT…LPSS, and RPDN…TSLS. A phosphoserine mark is found at Ser641 and Ser643. Residues 647 to 700 form a disordered region; it reads LTEFVKQPKINGQRESRSAAAARKKEESGNKSQSNSQNSLSDESGNVTPVSKKQ. The span at 658–675 shows a compositional bias: basic and acidic residues; the sequence is GQRESRSAAAARKKEESG. Positions 676-691 are enriched in low complexity; it reads NKSQSNSQNSLSDESG.

Heterotetramer of alp13, clr6, prw1 and pst2.

It is found in the nucleus. In terms of biological role, has a role in chromatin assembly and chromosome segregation. Involved in the deacetylation of histones. The chain is Paired amphipathic helix protein pst2 (pst2) from Schizosaccharomyces pombe (strain 972 / ATCC 24843) (Fission yeast).